The primary structure comprises 195 residues: MIIQDVELVKVARTPGDYPPPLKGEVAFVGRSNVGKSSLLNALFNKKIAFVSKTPGKTRSINFYLVNSKYYFVDLPGYGYAKVSKKERMLWKRLVEDYFKNRWSLQMVFLLVDGRIPPQDSDFMMIEWMKSLNIPFTIVLTKMDKVKMSERAKKLEEHQKEFSRYGEYTIIPTSSVTGEGISELLDLISTLLKEN.

An EngB-type G domain is found at Leu22–Glu194. Residues Gly30–Ser37, Gly56–Ser60, Asp74–Gly77, Thr141–Asp144, and Thr173–Ser175 each bind GTP. The Mg(2+) site is built by Ser37 and Thr58.

Belongs to the TRAFAC class TrmE-Era-EngA-EngB-Septin-like GTPase superfamily. EngB GTPase family. The cofactor is Mg(2+).

In terms of biological role, necessary for normal cell division and for the maintenance of normal septation. The protein is Probable GTP-binding protein EngB of Thermotoga petrophila (strain ATCC BAA-488 / DSM 13995 / JCM 10881 / RKU-1).